A 205-amino-acid chain; its full sequence is NADH dehydrogenase (205 aa).

FMN-binding positions include 17–21 (RRSIR), Q73, 158–159 (LG), and R195.

This sequence belongs to the nitroreductase family. As to quaternary structure, homodimer. It depends on FMN as a cofactor.

The catalysed reaction is a ubiquinone + NADH + 5 H(+)(in) = a ubiquinol + NAD(+) + 4 H(+)(out). Its function is as follows. Can oxidize either NADH or NADPH with a preference for NADH. Can catalyze electron transfer from NADH to various electron acceptors which include, in addition to molecular oxygen, cytochrome c, 2,6 dichlorphenolindophenol, methylene blue, ferricyanide or P-nitroblue tetrazolium. In Thermus thermophilus (strain ATCC 27634 / DSM 579 / HB8), this protein is NADH dehydrogenase (nox).